We begin with the raw amino-acid sequence, 195 residues long: CASP-like protein 1E2 (195 aa).

Over 1 to 29 (MEVESKTSFGGMESKSKEVKVVTGGKLRP) the chain is Cytoplasmic. Residues 30–50 (FDLVLRVVALALTLVAAVLLG) form a helical membrane-spanning segment. Topologically, residues 51–82 (VDKQTKVVSLQLLPTLPPMDVPVTAKWRYLSA) are extracellular. A helical membrane pass occupies residues 83 to 103 (FVYFVVSNAIACSYAALSLLL). At 104 to 122 (SVGNSKGNKGLGLAITVMD) the chain is on the cytoplasmic side. The chain crosses the membrane as a helical span at residues 123–143 (LVMVALLFSSNGAAGAIGLMG). Residues 144 to 165 (YEGNSRVRWGKVCNVFGKFCNQ) lie on the Extracellular side of the membrane. A helical transmembrane segment spans residues 166–186 (VAVALGLSFFGGLAFFLLVVM). Over 187 to 195 (AAFALNKRH) the chain is Cytoplasmic.

The protein belongs to the Casparian strip membrane proteins (CASP) family. Homodimer and heterodimers.

It is found in the cell membrane. This chain is CASP-like protein 1E2, found in Vitis vinifera (Grape).